Here is a 706-residue protein sequence, read N- to C-terminus: MSGIAGTSQDTSVAASASSSSTRPAAASSSIAPPSPSLTTAPVKEQEQDDDDDQENDDEEEEEEGTAAITGADGLTAKQRKKKKSKAAAKLRKKLGLGGSPTDASEGKLLASGSSREGKISDEVVSQVQRAVQAEHGSVAANAVTKANLAKVMAMMNLERDAMLKSQDSKQKAQKAIADHKFWKTQPVMKPTDAPVVKSDQEGSIEASVPPEQVRQEPYPLPADFEWVMIDVDNEGELKEVYDLLSANYVEDDDATFRFDYSPEFLHWVLKHPGYQKTWHIGVRVASTKKLVAFISGIPHELRVREKSYQSTEINFLCVHKKLRSKRLAPVLIKEVTRQCHLTGVFHAIYTVGSVLPTPVSCSRYYHRTINAKKLAEIGFSAIPHNMSMEAHVKRFELPAKTNLPGLREMERRDVAQVGKLMRRYMRRFDMAPRFSDHEVEHILLSGRGEACQGGRGRKGQVTWTYVVENSEGRITDMFAFYSLPSSILDSDKHQSLNAAYLFYYATDVVFQGDCDCDSDSSGVCDAETGRASTSQPSSERAVALAAGKAAWQCNSLTNLTSCELADEARVAAWDSEPAHIKTALKTRLNLLINTLLIIARDHDFDVVNCVTVMDNALFLQQQKFGPGDGFLRFYLFNWRTKPVAGGMGARPGEAELDPVQAYARSMAKRAAHTDDDDVKRLAEQLIRNAAINPAEVGSGNGIVMV.

Positions 1-119 (MSGIAGTSQD…LASGSSREGK (119 aa)) are disordered. Positions 7-42 (TSQDTSVAASASSSSTRPAAASSSIAPPSPSLTTAP) are enriched in low complexity. Positions 47–65 (EQDDDDDQENDDEEEEEEG) are enriched in acidic residues. Residues 78 to 95 (KQRKKKKSKAAAKLRKKL) show a composition bias toward basic residues. Tetradecanoyl-CoA contacts are provided by residues 180 to 183 (HKFW), 317 to 319 (LCV), and 325 to 329 (SKRLA). The active-site Proton acceptor; via carboxylate is Val706.

This sequence belongs to the NMT family. Monomer.

It is found in the cytoplasm. The catalysed reaction is N-terminal glycyl-[protein] + tetradecanoyl-CoA = N-tetradecanoylglycyl-[protein] + CoA + H(+). Its function is as follows. Adds a myristoyl group to the N-terminal glycine residue of certain cellular proteins. This chain is Glycylpeptide N-tetradecanoyltransferase (NMT1), found in Mycosarcoma maydis (Corn smut fungus).